Here is a 243-residue protein sequence, read N- to C-terminus: Adenylate dimethylallyltransferase (243 aa).

Belongs to the isopentenyl transferase family.

The enzyme catalyses dimethylallyl diphosphate + AMP = N(6)-(dimethylallyl)adenosine 5'-phosphate + diphosphate. Its function is as follows. Transfers dimethylallyl groups to AMP as part of the biosynthesis of cytokinin phytohormones. The polypeptide is Adenylate dimethylallyltransferase (tzs) (Rhizobium rhizogenes (Agrobacterium rhizogenes)).